Consider the following 197-residue polypeptide: Imidazoleglycerol-phosphate dehydratase (197 aa).

The protein belongs to the imidazoleglycerol-phosphate dehydratase family.

It is found in the cytoplasm. The catalysed reaction is D-erythro-1-(imidazol-4-yl)glycerol 3-phosphate = 3-(imidazol-4-yl)-2-oxopropyl phosphate + H2O. It functions in the pathway amino-acid biosynthesis; L-histidine biosynthesis; L-histidine from 5-phospho-alpha-D-ribose 1-diphosphate: step 6/9. The protein is Imidazoleglycerol-phosphate dehydratase of Syntrophobacter fumaroxidans (strain DSM 10017 / MPOB).